Here is a 476-residue protein sequence, read N- to C-terminus: Monofunctional riboflavin biosynthesis protein RIBA 2, chloroplastic (476 aa).

The transit peptide at 1 to 54 (MASLTLRCDSTHLLPSRDVVKGTKPFGTSLVYPRIISKKFNVRMRVIPEEGDVF) directs the protein to the chloroplast. The tract at residues 44–306 (MRVIPEEGDV…IADLIRYRRK (263 aa)) is DHBP synthase. D-ribulose 5-phosphate is bound by residues 130 to 131 (RE), D135, 245 to 249 (RAGHT), and E269. E131 serves as a coordination point for Mg(2+). H248 is a Mg(2+) binding site. The tract at residues 307–476 (RERLVEFTAV…SGKVPLITTP (170 aa)) is inactive GTP cyclohydrolase II. GTP is bound by residues 357-361 (RVHAE), Q376, 399-401 (ESK), and T450.

The protein in the N-terminal section; belongs to the DHBP synthase family. This sequence in the C-terminal section; belongs to the GTP cyclohydrolase II family. It depends on Mg(2+) as a cofactor. The cofactor is Mn(2+). In terms of tissue distribution, expressed in leaves, shoots, roots, flowers and siliques.

Its subcellular location is the plastid. The protein localises to the chloroplast. The catalysed reaction is D-ribulose 5-phosphate = (2S)-2-hydroxy-3-oxobutyl phosphate + formate + H(+). It functions in the pathway cofactor biosynthesis; riboflavin biosynthesis; 2-hydroxy-3-oxobutyl phosphate from D-ribulose 5-phosphate: step 1/1. Its function is as follows. Involved in riboflavin biosynthesis. Catalyzes the conversion of D-ribulose 5-phosphate to formate and 3,4-dihydroxy-2-butanone 4-phosphate. RIBA2 and RIBA3 together are not able to complement the loss of function of RIBA1. This Arabidopsis thaliana (Mouse-ear cress) protein is Monofunctional riboflavin biosynthesis protein RIBA 2, chloroplastic (RIBA2).